Consider the following 168-residue polypeptide: Lipoprotein signal peptidase (168 aa).

The next 3 membrane-spanning stretches (helical) occupy residues 6 to 26 (VLAA…DQIT), 70 to 90 (WFLA…IAKL), and 98 to 118 (ALAL…RMLL). Catalysis depends on residues Asp123 and Asp141. A helical transmembrane segment spans residues 139-159 (IADSAICIGAALLVWDSLFGT).

Belongs to the peptidase A8 family.

Its subcellular location is the cell inner membrane. It carries out the reaction Release of signal peptides from bacterial membrane prolipoproteins. Hydrolyzes -Xaa-Yaa-Zaa-|-(S,diacylglyceryl)Cys-, in which Xaa is hydrophobic (preferably Leu), and Yaa (Ala or Ser) and Zaa (Gly or Ala) have small, neutral side chains.. It participates in protein modification; lipoprotein biosynthesis (signal peptide cleavage). Its function is as follows. This protein specifically catalyzes the removal of signal peptides from prolipoproteins. The sequence is that of Lipoprotein signal peptidase from Teredinibacter turnerae (strain ATCC 39867 / T7901).